The primary structure comprises 477 residues: Glutamate--tRNA ligase 2 (477 aa).

The 'HIGH' region signature appears at 12-22 (PSPTGRMHLGN). The Zn(2+) site is built by C109, C111, C136, and H138. The 'KMSKS' region motif lies at 253–257 (PLSKR). Residue K256 participates in ATP binding.

Belongs to the class-I aminoacyl-tRNA synthetase family. Glutamate--tRNA ligase type 1 subfamily. As to quaternary structure, monomer. The cofactor is Zn(2+).

It localises to the cytoplasm. The enzyme catalyses tRNA(Glu) + L-glutamate + ATP = L-glutamyl-tRNA(Glu) + AMP + diphosphate. In terms of biological role, catalyzes the attachment of glutamate to tRNA(Glu) in a two-step reaction: glutamate is first activated by ATP to form Glu-AMP and then transferred to the acceptor end of tRNA(Glu). The sequence is that of Glutamate--tRNA ligase 2 from Alkalilimnicola ehrlichii (strain ATCC BAA-1101 / DSM 17681 / MLHE-1).